The following is a 434-amino-acid chain: MTTQVVNVIGAGLAGSEAAYQIAKRGVQVRLYEMRPVRQTPAHHTDKFAELVCSNSLRANTLTNAVGVIKEEMRLMDSVIIRAADECSVPAGGALAVDRHEFAAKVTEYVKNHPNVTVVNEELTEIPEGPTIIATGPLTSPDLAAQLKELTGEDYFYFYDAAAPIVEKDSIDMNKVYLKSRYDKGEAAYLNCPMTEEEFDRFYEALIAAETVPLKEFEKEIFFEGCMPVEVMASRGRQTLVFGPMKPVGLEDPKTGKTPYAVVQLRQDDAAGTLYNIVGFQTHLKWGPQKEVLQLIPGLENAEIVRYGVMHRNTFINSPNLLRPTYQYKQRDDLFFAGQMTGVEGYVESAASGLLAGINAARLVQGEEPVVLPSVTAMGSMANYITATNAKNFQPMNANFGLFAPLEKKIKKKAERNEAYATRALETIQNFVNI.

10–15 (GAGLAG) provides a ligand contact to FAD.

The protein belongs to the MnmG family. TrmFO subfamily. The cofactor is FAD.

It localises to the cytoplasm. It carries out the reaction uridine(54) in tRNA + (6R)-5,10-methylene-5,6,7,8-tetrahydrofolate + NADH + H(+) = 5-methyluridine(54) in tRNA + (6S)-5,6,7,8-tetrahydrofolate + NAD(+). It catalyses the reaction uridine(54) in tRNA + (6R)-5,10-methylene-5,6,7,8-tetrahydrofolate + NADPH + H(+) = 5-methyluridine(54) in tRNA + (6S)-5,6,7,8-tetrahydrofolate + NADP(+). Catalyzes the folate-dependent formation of 5-methyl-uridine at position 54 (M-5-U54) in all tRNAs. In Bacillus cereus (strain G9842), this protein is Methylenetetrahydrofolate--tRNA-(uracil-5-)-methyltransferase TrmFO.